The chain runs to 338 residues: dTDP-glucose 4,6-dehydratase (338 aa).

Residues 12-13 (FI), 33-36 (DKLT), 59-60 (DI), 81-85 (LAAES), and T100 contribute to the NAD(+) site. S85 contacts substrate. Substrate is bound at residue T134. D135 serves as the catalytic Proton donor. Catalysis depends on proton acceptor residues E136 and Y160. 160 to 164 (YSASK) is a binding site for NAD(+). N189 serves as a coordination point for substrate. N190 provides a ligand contact to NAD(+). Substrate-binding positions include 199–200 (KL), 215–217 (PIY), R224, N259, and 293–297 (DRPGH).

The protein belongs to the NAD(P)-dependent epimerase/dehydratase family. dTDP-glucose dehydratase subfamily. As to quaternary structure, homodimer. It depends on NAD(+) as a cofactor.

The enzyme catalyses dTDP-alpha-D-glucose = dTDP-4-dehydro-6-deoxy-alpha-D-glucose + H2O. The protein operates within carbohydrate biosynthesis; dTDP-L-rhamnose biosynthesis. It participates in bacterial outer membrane biogenesis; LPS O-antigen biosynthesis. Its function is as follows. Catalyzes the dehydration of dTDP-D-glucose to form dTDP-6-deoxy-D-xylo-4-hexulose via a three-step process involving oxidation, dehydration and reduction. This chain is dTDP-glucose 4,6-dehydratase (rffG), found in Haemophilus influenzae (strain ATCC 51907 / DSM 11121 / KW20 / Rd).